A 955-amino-acid chain; its full sequence is MGCPGWPLALFALLLASCSGGPSGVSSPAPCPAPCACDLDGGADCSGKGLVTVPDGLSVFTHSLDLSMNNITKLPEGAFKGFPYLEELRLAGNDLSIIHPMALSGLKELKVLTLQNNQLKTVPSESLKGLVSLQSLRLDANHIVTVPEDSFEGLVQLRHLWLDDNSLTEVPIRPLSNLPSLQALTLALNKISHIPDYAFSNLSSLVVLHLHNNKIRTLGPHCFHGLDNLEALDLNYNNLIDFPDSIRSLPNLKELGFHSNSITIIPDGAFVKNPLLRTIHLYDNPLSFVGNSAFQNLSDLHFLIIRGASNVQWFPNLTGTNNLESLTLTGTKIRSIPIKFCQEQKMLRTLDLSYNEISALVGFEGCSSLEEVYLQNNQIQEVQNETFQGLAALRMLDLSRNRIHTIHKEAFVTLKALTNLDLSFNDLTAFPTAGLHGLNQLKLTGNPNFKETLTAKDLIKLSSVSVPYAYQCCAFSACNSYMTTTVEEDRLRAQRLLLDHDRAAMDPDYMGTEDDKEHVQALIQCNPATGPFKPCEYLLGSWMIRLTVWFIFLLALIFNVIVIVTMFASCSQLTSSKLFIGLIAVSNLFMGVYTGTLTVLDTISWGQFAEFGIWWETGNGCKVAGFLAIFSSESAIFFLMLAAIERSLSAKDIIKKEKHQHLRKFQVASLLAVLLAAAAGCLPLFHIGEFSSSPLCLPFPTGETPSLGFTVTLVLLNSLAFLIMVITYTKLYCTIEKEDLSENAESSMIKHVAWLIFTNCIFFCPVAFFSFAPLITAIYISPEIMKSVTLIFLPLPACLNPVLYVFFNPKFKEDWKLLRWRLTKRSGSVAVATNSQRGCVTQDFYYDFGMYSHLQGGNFAVCDYCESVLLKNPPPCKHLIKSHSCPTLAVVPCQRPDNYWSEFGTQSAHSDCADEEDSFVSDSSDQVQVCGRACFYQSRGLPLVRYAYNIPRMKD.

A signal peptide spans 1–21 (MGCPGWPLALFALLLASCSGG). The Extracellular portion of the chain corresponds to 22-547 (PSGVSSPAPC…LLGSWMIRLT (526 aa)). An LRRNT domain is found at 26-59 (SSPAPCPAPCACDLDGGADCSGKGLVTVPDGLSV). 2 cysteine pairs are disulfide-bonded: cysteine 31–cysteine 37 and cysteine 35–cysteine 45. 10 LRR repeats span residues 57–81 (LSVF…AFKG), 83–105 (PYLE…ALSG), 106–129 (LKEL…SLKG), 131–153 (VSLQ…SFEG), 155–177 (VQLR…PLSN), 178–201 (LPSL…AFSN), 203–225 (SSLV…CFHG), 226–249 (LDNL…IRSL), 250–272 (PNLK…AFVK), and 274–296 (PLLR…AFQN). Asparagine 201 carries an N-linked (GlcNAc...) asparagine glycan. Residues asparagine 296 and asparagine 316 are each glycosylated (N-linked (GlcNAc...) asparagine). LRR repeat units lie at residues 320-343 (TNNL…FCQE), 345-365 (KMLR…GFEG), 366-389 (CSSL…TFQG), 390-413 (LAAL…AFVT), and 415-437 (KALT…GLHG). An intrachain disulfide couples cysteine 341 to cysteine 366. The N-linked (GlcNAc...) asparagine glycan is linked to asparagine 384. 2 cysteine pairs are disulfide-bonded: cysteine 472–cysteine 525 and cysteine 473–cysteine 478. A helical membrane pass occupies residues 548 to 568 (VWFIFLLALIFNVIVIVTMFA). Residues 569–578 (SCSQLTSSKL) are Cytoplasmic-facing. The chain crosses the membrane as a helical span at residues 579–599 (FIGLIAVSNLFMGVYTGTLTV). Residues 600–623 (LDTISWGQFAEFGIWWETGNGCKV) are Extracellular-facing. Cysteine 621 and cysteine 696 are joined by a disulfide. Residues 624–644 (AGFLAIFSSESAIFFLMLAAI) traverse the membrane as a helical segment. Residues 645 to 666 (ERSLSAKDIIKKEKHQHLRKFQ) are Cytoplasmic-facing. Residues 667–687 (VASLLAVLLAAAAGCLPLFHI) form a helical membrane-spanning segment. At 688–706 (GEFSSSPLCLPFPTGETPS) the chain is on the extracellular side. Residues 707–727 (LGFTVTLVLLNSLAFLIMVIT) traverse the membrane as a helical segment. At 728–759 (YTKLYCTIEKEDLSENAESSMIKHVAWLIFTN) the chain is on the cytoplasmic side. The chain crosses the membrane as a helical span at residues 760 to 780 (CIFFCPVAFFSFAPLITAIYI). The Extracellular portion of the chain corresponds to 781 to 786 (SPEIMK). A helical membrane pass occupies residues 787–807 (SVTLIFLPLPACLNPVLYVFF). At 808–955 (NPKFKEDWKL…YAYNIPRMKD (148 aa)) the chain is on the cytoplasmic side.

This sequence belongs to the G-protein coupled receptor 1 family.

It is found in the cell membrane. Functionally, receptor for R-spondins that potentiates the canonical Wnt signaling pathway and is involved in the formation of various organs. Upon binding to R-spondins (RSPO1, RSPO2, RSPO3 or RSPO4), associates with phosphorylated LRP6 and frizzled receptors that are activated by extracellular Wnt receptors, triggering the canonical Wnt signaling pathway to increase expression of target genes. In contrast to classical G-protein coupled receptors, does not activate heterotrimeric G-proteins to transduce the signal. Its function as activator of the Wnt signaling pathway is required for the development of various organs, including liver, kidney, intestine, bone, reproductive tract and eye. May play a role in regulating the circadian rhythms of plasma lipids. Required for proper development of GnRH neurons (gonadotropin-releasing hormone expressing neurons) that control the release of reproductive hormones from the pituitary gland. The protein is Leucine-rich repeat-containing G-protein coupled receptor 4 (lgr4) of Xenopus tropicalis (Western clawed frog).